The following is a 443-amino-acid chain: MQVTVEATGELERRLTITLPGSDFESKVQERLRSMVPRIKMDGFRPGKVPYKVVERRYGSAVRQEVSDEFVRDSFRDAIKQESLRPAGMPQIEPPQLEAGESFAYTVTFEVLPEIESVKLEGIKIKQPRAEVTDKDIEGVLKKLQEQHIEWEPMERPAQEADGVTITYHGSIEGKPFPGGSKENFFVILGKGTTLKEFEEHLIGVNKGQELTFEITFPEHYGNQELAGKKASFAVKVISVTAPRLPEINEDFAEKLGVKEGGVAALRQEIKASMTRNLEQAVRDRVREQIMDGLLVANPTTLPISLVKEETSILLEQAKNNLAKQGVNPQEISLDESPFVEQARRRVALRLIFSTILEKQEIKADQDKIKQRVTELAASYEDPEEFSRWIFSDRERLSEIENAVMETQIIDWVLDQVEVLDKSMSFEEVVNPQISSAKEKVQD.

A PPIase FKBP-type domain is found at 161–246 (ADGVTITYHG…VISVTAPRLP (86 aa)).

This sequence belongs to the FKBP-type PPIase family. Tig subfamily.

It is found in the cytoplasm. It catalyses the reaction [protein]-peptidylproline (omega=180) = [protein]-peptidylproline (omega=0). Functionally, involved in protein export. Acts as a chaperone by maintaining the newly synthesized protein in an open conformation. Functions as a peptidyl-prolyl cis-trans isomerase. This Nitrosococcus oceani (strain ATCC 19707 / BCRC 17464 / JCM 30415 / NCIMB 11848 / C-107) protein is Trigger factor.